The sequence spans 697 residues: MAR-binding filament-like protein 1 (697 aa).

Residues 1–41 (MATSCFPPFSASSSSLCSSQFTPLLSCPRNTQICRKKRPVM) constitute a chloroplast transit peptide. The transit peptide at 42–79 (ASMHSENQKESNVCNRRSILFVGFSVLPLLNLRARALE) directs the protein to the thylakoid. Residues 80 to 106 (GLSTDSQAQPQKEETEQTIQGSAGNPF) are Lumenal, thylakoid-facing. Positions 81-100 (LSTDSQAQPQKEETEQTIQG) are disordered. Residues 107-127 (VSLLNGLGVVGSGVLGSLYAL) traverse the membrane as a helical segment. Topologically, residues 128 to 697 (ARNEKAVSDA…GEKEKVNVQQ (570 aa)) are stromal. A coiled-coil region spans residues 203 to 671 (LQNEKKLAED…KGEILRLRSQ (469 aa)). Residues 599 to 629 (TSRNSSLEDEREVHRQSVSEQKQISQEAQEN) form a disordered region. Residues 604-615 (SLEDEREVHRQS) show a composition bias toward basic and acidic residues. Over residues 616 to 627 (VSEQKQISQEAQ) the composition is skewed to polar residues.

As to quaternary structure, interacts with MAF1. Interacts with PTST2; the interaction is essential for the initiation of starch granules biosynthesis in leaf chloroplasts, for the correct location of the process in the stromal spaces between the thylakoid membranes, and for the association of PTST2 with the thylakoid membranes. Phosphorylated in vitro by human casein kinase II. In terms of processing, predicted to be translocated into the thylakoid by the Tat system.

It is found in the plastid. The protein localises to the chloroplast. Its subcellular location is the chloroplast thylakoid membrane. It localises to the chloroplast stroma. The protein resides in the chloroplast nucleoid. It is found in the nucleus. The protein localises to the nucleus matrix. Its function is as follows. Required for the initiation of starch granules biosynthesis in leaf chloroplasts. Anchored to the thylakoid membranes with its C-terminus facing into the stroma where it is essential for localizing PTST2 and SS4 to the stromal spaces between the thylakoid membranes in order to begin starch granule formation. Associated with leaf chloroplastic nucleoids in vivo. Binds to various chloroplastic double-stranded DNA fragments without particular sequence specificity in vitro. May function at the interface between nucleoids and thylakoids possibly by anchoring nucleoids to the thylakoid membrane system in mature chloroplasts. Binds nuclear DNA. Interacts with chromatin via matrix attachment regions (MARs). Likely to participate in nuclear architecture by connecting chromatin with the nuclear matrix and potentially with the nuclear envelope. This Solanum lycopersicum (Tomato) protein is MAR-binding filament-like protein 1.